We begin with the raw amino-acid sequence, 204 residues long: MTHFSQQDNFSVAARVLGALFYYAPESAEAAPLVAVLTRDGWETQWPLPEASLAPLVTAFQTQSEETHAQAWQRLFVGPWALPSPPWGSVWLDRESVLFGDSTLALRQWMREKGIQFEMKQNEPEDHFGSLLLMAAWLAENGRQTECEELLAWHLFPWSTRFLDVFIEKAEHPFYRALGELARLTLAQWQSQLLIPVAVKPLFR.

The protein belongs to the TorD/DmsD family. DmsD subfamily.

Functionally, required for biogenesis/assembly of DMSO reductase, but not for the interaction of the DmsA signal peptide with the Tat system. May be part of a chaperone cascade complex that facilitates a folding-maturation pathway for the substrate protein. The sequence is that of Tat proofreading chaperone DmsD from Escherichia coli O6:H1 (strain CFT073 / ATCC 700928 / UPEC).